The primary structure comprises 360 residues: Phospho-N-acetylmuramoyl-pentapeptide-transferase (360 aa).

A run of 10 helical transmembrane segments spans residues 27-47 (IVGL…LIAW), 71-91 (TPTM…LLWA), 97-117 (YVWC…IDDY), 132-152 (WKYF…YAIG), 168-188 (VMPQ…VGTS), 199-219 (GLAI…AWAT), 236-256 (AGEL…FLWF), 263-283 (VFMG…IAVL), 288-308 (FLLV…ILQV), and 338-358 (VIVR…ATLK).

It belongs to the glycosyltransferase 4 family. MraY subfamily. Mg(2+) serves as cofactor.

It localises to the cell inner membrane. The catalysed reaction is UDP-N-acetyl-alpha-D-muramoyl-L-alanyl-gamma-D-glutamyl-meso-2,6-diaminopimeloyl-D-alanyl-D-alanine + di-trans,octa-cis-undecaprenyl phosphate = di-trans,octa-cis-undecaprenyl diphospho-N-acetyl-alpha-D-muramoyl-L-alanyl-D-glutamyl-meso-2,6-diaminopimeloyl-D-alanyl-D-alanine + UMP. It participates in cell wall biogenesis; peptidoglycan biosynthesis. Functionally, catalyzes the initial step of the lipid cycle reactions in the biosynthesis of the cell wall peptidoglycan: transfers peptidoglycan precursor phospho-MurNAc-pentapeptide from UDP-MurNAc-pentapeptide onto the lipid carrier undecaprenyl phosphate, yielding undecaprenyl-pyrophosphoryl-MurNAc-pentapeptide, known as lipid I. This Proteus mirabilis (strain HI4320) protein is Phospho-N-acetylmuramoyl-pentapeptide-transferase.